Consider the following 273-residue polypeptide: Ribosomal RNA small subunit methyltransferase A (273 aa).

S-adenosyl-L-methionine is bound by residues N18, L20, G45, E66, D91, and N113.

This sequence belongs to the class I-like SAM-binding methyltransferase superfamily. rRNA adenine N(6)-methyltransferase family. RsmA subfamily.

Its subcellular location is the cytoplasm. The enzyme catalyses adenosine(1518)/adenosine(1519) in 16S rRNA + 4 S-adenosyl-L-methionine = N(6)-dimethyladenosine(1518)/N(6)-dimethyladenosine(1519) in 16S rRNA + 4 S-adenosyl-L-homocysteine + 4 H(+). Functionally, specifically dimethylates two adjacent adenosines (A1518 and A1519) in the loop of a conserved hairpin near the 3'-end of 16S rRNA in the 30S particle. May play a critical role in biogenesis of 30S subunits. In Cronobacter sakazakii (strain ATCC BAA-894) (Enterobacter sakazakii), this protein is Ribosomal RNA small subunit methyltransferase A.